A 551-amino-acid chain; its full sequence is E3 ubiquitin-protein ligase TRIM8 (551 aa).

The RING-type zinc finger occupies 15 to 56 (CPICLHVFVEPVQLPCKHNFCRGCIGEAWAKDSGLVRCPECN). 2 B box-type zinc fingers span residues 92-132 (CVFC…ARGH) and 140-182 (VRAW…VCDV). Coiled coils occupy residues 181 to 249 (DVEI…DLRQ) and 274 to 295 (ERMQ…KTED). A disordered region spans residues 399-457 (QYGAAGTASSEGQSGQPLGPCSSTQHLVALPGGTQPVHSSPVFPPSQYPNGSTTQQPML). 2 stretches are compositionally biased toward polar residues: residues 405-424 (TASS…STQH) and 446-456 (YPNGSTTQQPM).

This sequence belongs to the TRIM/RBCC family. Homodimer. Interacts with SOCS1 (via) SH2 domain and SOCS box. Interacts with HSP90AB1; prevents nucleus translocation of phosphorylated STAT3 and HSP90AB1. Interacts with MAP3K7/TAK1. Interacts with PIAS3. Interacts with TICAM1. Interacts with TRIM15; this interaction prevents TRIM8 cytoplasmic translocation. High expression in heart, liver, and thymus. Expressed in embryonic CNS, kidney, lens and gut.

It carries out the reaction S-ubiquitinyl-[E2 ubiquitin-conjugating enzyme]-L-cysteine + [acceptor protein]-L-lysine = [E2 ubiquitin-conjugating enzyme]-L-cysteine + N(6)-ubiquitinyl-[acceptor protein]-L-lysine.. It functions in the pathway protein modification; protein ubiquitination. Functionally, E3 ubiquitin-protein ligase that participates in multiple biological processes including cell survival, differentiation, apoptosis, and in particular, the innate immune response. Participates in the activation of interferon-gamma signaling by promoting proteasomal degradation of the repressor SOCS1. Plays a positive role in the TNFalpha and IL-1beta signaling pathways. Mechanistically, induces the 'Lys-63'-linked polyubiquitination of MAP3K7/TAK1 component leading to the activation of NF-kappa-B. Also modulates STAT3 activity through negative regulation of PIAS3, either by degradation of PIAS3 through the ubiquitin-proteasome pathway or exclusion of PIAS3 from the nucleus. Negatively regulates TLR3/4-mediated innate immune response by catalyzing 'Lys-6'- and 'Lys-33'-linked polyubiquitination of TICAM1 and thereby disrupting the TICAM1-TBK1 interaction. This chain is E3 ubiquitin-protein ligase TRIM8 (Trim8), found in Mus musculus (Mouse).